Reading from the N-terminus, the 322-residue chain is Gluconeogenesis factor (322 aa).

This sequence belongs to the gluconeogenesis factor family.

The protein localises to the cytoplasm. Required for morphogenesis under gluconeogenic growth conditions. The chain is Gluconeogenesis factor from Listeria innocua serovar 6a (strain ATCC BAA-680 / CLIP 11262).